Here is a 447-residue protein sequence, read N- to C-terminus: Hydroxymethylglutaryl-CoA synthase (447 aa).

Glu-86 (proton donor/acceptor) is an active-site residue. The active-site Acyl-thioester intermediate is the Cys-118. Residues Cys-118, Asn-156, Thr-160, Ser-210, His-250, Lys-259, Asn-327, and Ser-361 each contribute to the (3S)-3-hydroxy-3-methylglutaryl-CoA site. Catalysis depends on His-250, which acts as the Proton donor/acceptor. Phosphothreonine is present on Thr-398.

This sequence belongs to the thiolase-like superfamily. HMG-CoA synthase family.

The catalysed reaction is acetoacetyl-CoA + acetyl-CoA + H2O = (3S)-3-hydroxy-3-methylglutaryl-CoA + CoA + H(+). It participates in metabolic intermediate biosynthesis; (R)-mevalonate biosynthesis; (R)-mevalonate from acetyl-CoA: step 2/3. Functionally, hydroxymethylglutaryl-CoA synthase; part of the first module of ergosterol biosynthesis pathway that includes the early steps of the pathway, conserved across all eukaryotes, and which results in the formation of mevalonate from acetyl-coenzyme A (acetyl-CoA). Hcs1 condenses acetyl-CoA with acetoacetyl-CoA to form hydroxymethylglutaryl-CoA (HMG-CoA). The first module starts with the action of the cytosolic acetyl-CoA acetyltransferase eg10 that catalyzes the formation of acetoacetyl-CoA. The hydroxymethylglutaryl-CoA synthases erg13 then condenses acetyl-CoA with acetoacetyl-CoA to form HMG-CoA. The rate-limiting step of the early module is the reduction to mevalonate by the 3-hydroxy-3-methylglutaryl-coenzyme A (HMG-CoA) reductases hcs1. The polypeptide is Hydroxymethylglutaryl-CoA synthase (Schizosaccharomyces pombe (strain 972 / ATCC 24843) (Fission yeast)).